A 387-amino-acid polypeptide reads, in one-letter code: Formate-dependent phosphoribosylglycinamide formyltransferase (387 aa).

N(1)-(5-phospho-beta-D-ribosyl)glycinamide-binding positions include 21–22 (EL) and Glu81. ATP is bound by residues Arg113, Lys154, 159–164 (SSGHGQ), 193–196 (EEFI), and Glu201. Residues 118-306 (TFAAEEVGVK…EFALHLRAVL (189 aa)) form the ATP-grasp domain. Positions 265 and 277 each coordinate Mg(2+). N(1)-(5-phospho-beta-D-ribosyl)glycinamide-binding positions include Asp284, Lys352, and 359 to 360 (RR).

The protein belongs to the PurK/PurT family. Homodimer.

The catalysed reaction is N(1)-(5-phospho-beta-D-ribosyl)glycinamide + formate + ATP = N(2)-formyl-N(1)-(5-phospho-beta-D-ribosyl)glycinamide + ADP + phosphate + H(+). It participates in purine metabolism; IMP biosynthesis via de novo pathway; N(2)-formyl-N(1)-(5-phospho-D-ribosyl)glycinamide from N(1)-(5-phospho-D-ribosyl)glycinamide (formate route): step 1/1. Its function is as follows. Involved in the de novo purine biosynthesis. Catalyzes the transfer of formate to 5-phospho-ribosyl-glycinamide (GAR), producing 5-phospho-ribosyl-N-formylglycinamide (FGAR). Formate is provided by PurU via hydrolysis of 10-formyl-tetrahydrofolate. In Wolinella succinogenes (strain ATCC 29543 / DSM 1740 / CCUG 13145 / JCM 31913 / LMG 7466 / NCTC 11488 / FDC 602W) (Vibrio succinogenes), this protein is Formate-dependent phosphoribosylglycinamide formyltransferase.